Here is a 229-residue protein sequence, read N- to C-terminus: Glutathione S-transferase 1 (229 aa).

The GST N-terminal domain occupies 2-83 (SPVKVFGHPM…YILRKYGGTA (82 aa)). Residues 41–42 (HK), 54–55 (KM), and 67–68 (ES) each bind glutathione. The GST C-terminal domain occupies 93–223 (GIEELAMVDV…RVCKHMPTEF (131 aa)).

The protein belongs to the GST superfamily. Phi family.

It catalyses the reaction RX + glutathione = an S-substituted glutathione + a halide anion + H(+). In terms of biological role, conjugation of reduced glutathione to a wide number of exogenous and endogenous hydrophobic electrophiles. The protein is Glutathione S-transferase 1 (GSTA1) of Triticum aestivum (Wheat).